A 1403-amino-acid polypeptide reads, in one-letter code: E3 ubiquitin-protein ligase SNT2 (1403 aa).

A disordered region spans residues 40 to 62; sequence SGAKTKGSNSQTPRNCKRTSNPA. Residues 45 to 62 are compositionally biased toward polar residues; the sequence is KGSNSQTPRNCKRTSNPA. The BAH domain maps to 121-258; sequence VLLSANDTIY…RYTLKYYKVY (138 aa). The segment at 317–369 adopts a PHD-type 1 zinc-finger fold; the sequence is DKRCQFCKEWCIQKESLSCDECGVCAHLYCMDPPLDRKPNKDVVWTCFSCLQK. Residues 555–606 form the SANT domain; that stretch reads LKEPSFTAVEIRKFEEAVEKFGSELRPVCEYVGTQPMSMIVRFYYNWKKTER. Residues 1038–1097 form a PHD-type 2 zinc finger; sequence RTFCSVCKEKFNDNDNYEVVCGNCGLTVHYFCYAIKLPKDMKKNTNLKTFKWLCDPCSND. The RING-type; degenerate zinc finger occupies 1041 to 1095; that stretch reads CSVCKEKFNDNDNYEVVCGNCGLTVHYFCYAIKLPKDMKKNTNLKTFKWLCDPCS. The C2HC pre-PHD-type zinc finger occupies 1105–1153; it reads TYQCSMCPTKDYDYDRYRSQSFKICPDALKCTSLGTWVHLVCSLFNEDI. The PHD-type 3; degenerate zinc-finger motif lies at 1177 to 1231; it reads FTCGVCRINGGGLVKCNKCQYRYHITCAQNSSNFKLMFEKKNMSVDTTLPCIKDV.

As to quaternary structure, component of the Snt2C complex composed of SNT2, ECM5 and RPD3. Interacts with the E2 ubiquitin-conjugating enzyme UBC4 and histones H3 and H4. Binding is enhanced to methylated histone H3K36me3.

It is found in the cytoplasm. It localises to the nucleus. It catalyses the reaction S-ubiquitinyl-[E2 ubiquitin-conjugating enzyme]-L-cysteine + [acceptor protein]-L-lysine = [E2 ubiquitin-conjugating enzyme]-L-cysteine + N(6)-ubiquitinyl-[acceptor protein]-L-lysine.. Its function is as follows. Transcriptional regulator that, together with ECM5, recruits histone deacetylase RPD3 to a small number of promoters of stress-response genes in response to oxidative stress. Probable ubiquitin-protein ligase involved in the degradation-related ubiquitination of histones. Contributes to the post-translational regulation of histone protein levels by polyubiquitination of excess histones for subsequent degradation. The polypeptide is E3 ubiquitin-protein ligase SNT2 (Saccharomyces cerevisiae (strain ATCC 204508 / S288c) (Baker's yeast)).